We begin with the raw amino-acid sequence, 529 residues long: MFTVMTRQPCEQAGFRALSRTPAIVTLVVLLVSIVVLVTLTLIQIRHPQVLPPGLKYGVVLDAGSSRTTVYVYQWPAEKENNTGVVSQTFRCSVKGSGISSYENNPQDAPKAFEDCILKVKEQVPEHLHGSTRIYLGATAGMRLLRLQNETAAREVLESIQSYFKSQPFDFRGAQIISGQEEGVYGWITANYIMGNFLEKNLWHMWVHPHGVDTTGALDLGGASTQISFVAGEKMEPNASDTVQVSLYGYTYTLYTHSFQCYGQNEAEKKFLAMLLQSPSTEANISNPCYPQGYSTAFTLGHVFGSLCTEKQRPESYNSSKSVTFMGTGDPRLCREKVASVFDFNACQEQDACSFDGIYQPKVQGPFVAFAGFYYTASALNLSGSFSLTSFNDSSWDFCRHTWSELPALLSRFDETYARSYCFSAHYIYHLLVNGYKFTEETWPQIRFEKEVGNSSIAWSLGYMLSLTNQIPAGSPLIHLPIQPPVFMGVLAFFTAIALLCLAFLLYLCSSFRTKERSENAFDQAVDSD.

The Cytoplasmic segment spans residues 1–22 (MFTVMTRQPCEQAGFRALSRTP). The chain crosses the membrane as a helical span at residues 23-43 (AIVTLVVLLVSIVVLVTLTLI). The Extracellular portion of the chain corresponds to 44–485 (QIRHPQVLPP…PLIHLPIQPP (442 aa)). Residue N81 is glycosylated (N-linked (GlcNAc...) asparagine). C92 and C116 are oxidised to a cystine. N149 carries an N-linked (GlcNAc...) asparagine glycan. E182 serves as the catalytic Proton acceptor. 222-226 (GASTQ) lines the ATP pocket. N-linked (GlcNAc...) asparagine glycans are attached at residues N238, N284, and N318. 3 cysteine pairs are disulfide-bonded: C261–C308, C289–C334, and C347–C353. Residues N381 and N392 are each glycosylated (N-linked (GlcNAc...) asparagine). Residues C399 and C422 are joined by a disulfide bond. A glycan (N-linked (GlcNAc...) asparagine) is linked at N454. Residues 486 to 506 (VFMGVLAFFTAIALLCLAFLL) traverse the membrane as a helical segment. Over 507 to 529 (YLCSSFRTKERSENAFDQAVDSD) the chain is Cytoplasmic.

It belongs to the GDA1/CD39 NTPase family. Ca(2+) is required as a cofactor. It depends on Mg(2+) as a cofactor.

It localises to the cell membrane. It carries out the reaction a ribonucleoside 5'-triphosphate + 2 H2O = a ribonucleoside 5'-phosphate + 2 phosphate + 2 H(+). Its function is as follows. Catalyzes the hydrolysis of nucleoside triphosphates and diphosphates. Has a threefold preference for the hydrolysis of ATP and UTP over ADP and UDP. The protein is Ectonucleoside triphosphate diphosphohydrolase 3 of Mus musculus (Mouse).